Reading from the N-terminus, the 312-residue chain is MAAADELAFHEFEEATNLLAETPDAATTSQSDELTSREHVAVVVGSGIGYGAEVGEEEDDKTSLLQEEKPQPRFWTFDYYQSFFDVDTSQVLDRIKGSLLPHPGHNFVRHHLRNRPDLYGPFWICATLAFVLAVTGNLTLVLAQRRDPSIHYSPQFHKVTIAGITIYCYAWLVPLALWGFLRWRQGTRERMGLYTFLETVCVYGYSLFVFIPTVVLWLIPVQWIQWLFGALGLALSAAGLVFTLWPVVREDTRLVAAALLSTVVLLHALLALGCKLYFFQPLPLDHVVPAPQATPPSPNVLLPSSIQPMTTS.

Ala2 carries the post-translational modification N-acetylalanine. Topologically, residues 2-121 (AAADELAFHE…LRNRPDLYGP (120 aa)) are cytoplasmic. A helical membrane pass occupies residues 122-142 (FWICATLAFVLAVTGNLTLVL). Residues 143-160 (AQRRDPSIHYSPQFHKVT) lie on the Lumenal side of the membrane. The helical transmembrane segment at 161-181 (IAGITIYCYAWLVPLALWGFL) threads the bilayer. Topologically, residues 182-193 (RWRQGTRERMGL) are cytoplasmic. A helical membrane pass occupies residues 194 to 216 (YTFLETVCVYGYSLFVFIPTVVL). Topologically, residues 217–228 (WLIPVQWIQWLF) are lumenal. A helical transmembrane segment spans residues 229-249 (GALGLALSAAGLVFTLWPVVR). Residues 250-253 (EDTR) lie on the Cytoplasmic side of the membrane. The helical transmembrane segment at 254–274 (LVAAALLSTVVLLHALLALGC) threads the bilayer. The Lumenal portion of the chain corresponds to 275-312 (KLYFFQPLPLDHVVPAPQATPPSPNVLLPSSIQPMTTS).

The protein belongs to the YIP1 family. In terms of assembly, interacts with YIPF6; this interaction may stabilize YIPF2. May also form a ternary complex with YIPF1 and YIPF6.

The protein resides in the golgi apparatus. It is found in the cis-Golgi network membrane. The protein localises to the trans-Golgi network membrane. Its subcellular location is the late endosome membrane. This chain is Protein YIPF2 (Yipf2), found in Mus musculus (Mouse).